A 271-amino-acid polypeptide reads, in one-letter code: 3-methyl-2-oxobutanoate hydroxymethyltransferase (271 aa).

Mg(2+)-binding residues include Asp53 and Asp92. 3-methyl-2-oxobutanoate-binding positions include Asp53–Ser54, Asp92, and Lys120. A Mg(2+)-binding site is contributed by Glu122. Catalysis depends on Glu189, which acts as the Proton acceptor.

It belongs to the PanB family. As to quaternary structure, homodecamer; pentamer of dimers. Requires Mg(2+) as cofactor.

Its subcellular location is the cytoplasm. The catalysed reaction is 3-methyl-2-oxobutanoate + (6R)-5,10-methylene-5,6,7,8-tetrahydrofolate + H2O = 2-dehydropantoate + (6S)-5,6,7,8-tetrahydrofolate. It participates in cofactor biosynthesis; (R)-pantothenate biosynthesis; (R)-pantoate from 3-methyl-2-oxobutanoate: step 1/2. Functionally, catalyzes the reversible reaction in which hydroxymethyl group from 5,10-methylenetetrahydrofolate is transferred onto alpha-ketoisovalerate to form ketopantoate. This Paraburkholderia xenovorans (strain LB400) protein is 3-methyl-2-oxobutanoate hydroxymethyltransferase.